Reading from the N-terminus, the 540-residue chain is MEKCGFNSMLSNEELEHKCELSKSMDSLGLIGNTGAGGGPTLIFDVRDILSLIYDDTFKLKDRNGDSYSVYFDIDNKIFEIDDDSDSLSGLDIENQNQIFFDIYNDSDSLSELDSENKNFEIHNESDFMSKLESSFFSYLTYSCLKRRSSFSSYPTSLTSSNLNSGSKSYNPYYDPYMHDTRYSWNNDININSCIDSYIRCEIDSISSGSDNCSDSYIYSYICSEGVSYSDNGSSSIRTRTSTSSGSSYHIRGRSNNFEKNKKLKKLWVQCENCYALNYNKLFRSKMNVCEQCGYHLKMSSSDRIELSIDPGTWHPMDEDMVSTDPIEFHSEEEPYRDRIDSYQRQAGLTDAVQTGIGQLEGIPIAIGVMDFQFMGGSMGSVVGEKITRLIEYAIDRSLPVVIVCASGGARMQEGGLSLMQMAKISSASYNYQSNKKLFYVSILTSPTTGGVTASFGMLGDIIIAEPNAYVAFAGKRVIEETLNKKIPDGLQVAEYSFHKGLFDSIVPRNPLKGVPSELFQLHGFFSSTFHPLKSNKVKR.

Residues 229–249 are disordered; it reads YSDNGSSSIRTRTSTSSGSSY. The span at 233 to 248 shows a compositional bias: low complexity; sequence GSSSIRTRTSTSSGSS. The 272-residue stretch at 267–538 folds into the CoA carboxyltransferase N-terminal domain; sequence LWVQCENCYA…TFHPLKSNKV (272 aa). Zn(2+) is bound by residues Cys-271, Cys-274, Cys-290, and Cys-293. The segment at 271 to 293 adopts a C4-type zinc-finger fold; that stretch reads CENCYALNYNKLFRSKMNVCEQC.

The protein belongs to the AccD/PCCB family. In terms of assembly, acetyl-CoA carboxylase is a heterohexamer composed of biotin carboxyl carrier protein, biotin carboxylase and 2 subunits each of ACCase subunit alpha and ACCase plastid-coded subunit beta (accD). Zn(2+) serves as cofactor.

It is found in the plastid. The protein resides in the chloroplast stroma. It carries out the reaction N(6)-carboxybiotinyl-L-lysyl-[protein] + acetyl-CoA = N(6)-biotinyl-L-lysyl-[protein] + malonyl-CoA. Its pathway is lipid metabolism; malonyl-CoA biosynthesis; malonyl-CoA from acetyl-CoA: step 1/1. Functionally, component of the acetyl coenzyme A carboxylase (ACC) complex. Biotin carboxylase (BC) catalyzes the carboxylation of biotin on its carrier protein (BCCP) and then the CO(2) group is transferred by the transcarboxylase to acetyl-CoA to form malonyl-CoA. This chain is Acetyl-coenzyme A carboxylase carboxyl transferase subunit beta, chloroplastic, found in Amborella trichopoda.